A 706-amino-acid chain; its full sequence is Elongation factor G (706 aa).

A tr-type G domain is found at 8–295; that stretch reads ERYRNFGIMA…AVIDYLPSPL (288 aa). GTP contacts are provided by residues 17–24, 92–96, and 146–149; these read AHIDAGKT, DTPGH, and NKMD.

This sequence belongs to the TRAFAC class translation factor GTPase superfamily. Classic translation factor GTPase family. EF-G/EF-2 subfamily.

It is found in the cytoplasm. Its function is as follows. Catalyzes the GTP-dependent ribosomal translocation step during translation elongation. During this step, the ribosome changes from the pre-translocational (PRE) to the post-translocational (POST) state as the newly formed A-site-bound peptidyl-tRNA and P-site-bound deacylated tRNA move to the P and E sites, respectively. Catalyzes the coordinated movement of the two tRNA molecules, the mRNA and conformational changes in the ribosome. The polypeptide is Elongation factor G (Jannaschia sp. (strain CCS1)).